We begin with the raw amino-acid sequence, 364 residues long: N-acetyl-gamma-glutamyl-phosphate reductase (364 aa).

Cys-157 is an active-site residue.

It belongs to the NAGSA dehydrogenase family. Type 1 subfamily.

The protein resides in the cytoplasm. It catalyses the reaction N-acetyl-L-glutamate 5-semialdehyde + phosphate + NADP(+) = N-acetyl-L-glutamyl 5-phosphate + NADPH + H(+). Its pathway is amino-acid biosynthesis; L-arginine biosynthesis; N(2)-acetyl-L-ornithine from L-glutamate: step 3/4. In terms of biological role, catalyzes the NADPH-dependent reduction of N-acetyl-5-glutamyl phosphate to yield N-acetyl-L-glutamate 5-semialdehyde. The sequence is that of N-acetyl-gamma-glutamyl-phosphate reductase from Bifidobacterium animalis subsp. lactis (strain AD011).